The sequence spans 293 residues: 4-hydroxy-tetrahydrodipicolinate synthase (293 aa).

Threonine 45 contacts pyruvate. Residue tyrosine 133 is the Proton donor/acceptor of the active site. Residue lysine 161 is the Schiff-base intermediate with substrate of the active site. Residue isoleucine 203 coordinates pyruvate.

The protein belongs to the DapA family. Homotetramer; dimer of dimers.

It localises to the cytoplasm. The enzyme catalyses L-aspartate 4-semialdehyde + pyruvate = (2S,4S)-4-hydroxy-2,3,4,5-tetrahydrodipicolinate + H2O + H(+). It functions in the pathway amino-acid biosynthesis; L-lysine biosynthesis via DAP pathway; (S)-tetrahydrodipicolinate from L-aspartate: step 3/4. Functionally, catalyzes the condensation of (S)-aspartate-beta-semialdehyde [(S)-ASA] and pyruvate to 4-hydroxy-tetrahydrodipicolinate (HTPA). This Syntrophotalea carbinolica (strain DSM 2380 / NBRC 103641 / GraBd1) (Pelobacter carbinolicus) protein is 4-hydroxy-tetrahydrodipicolinate synthase.